The sequence spans 233 residues: Large ribosomal subunit protein uL1 (233 aa).

Belongs to the universal ribosomal protein uL1 family. Part of the 50S ribosomal subunit.

Its function is as follows. Binds directly to 23S rRNA. The L1 stalk is quite mobile in the ribosome, and is involved in E site tRNA release. Protein L1 is also a translational repressor protein, it controls the translation of the L11 operon by binding to its mRNA. This Shewanella sp. (strain MR-4) protein is Large ribosomal subunit protein uL1.